A 591-amino-acid polypeptide reads, in one-letter code: V-type ATP synthase alpha chain (591 aa).

233-240 serves as a coordination point for ATP; sequence GPFGAGKT.

This sequence belongs to the ATPase alpha/beta chains family.

It catalyses the reaction ATP + H2O + 4 H(+)(in) = ADP + phosphate + 5 H(+)(out). In terms of biological role, produces ATP from ADP in the presence of a proton gradient across the membrane. The V-type alpha chain is a catalytic subunit. This chain is V-type ATP synthase alpha chain, found in Streptococcus pyogenes serotype M12 (strain MGAS2096).